The sequence spans 106 residues: Toxin-like structure LSTX-D3 (106 aa).

The first 20 residues, 1–20 (MMKVLVVVALLVTLISYSSS), serve as a signal peptide directing secretion. Positions 21–41 (EGIDDLEADELLSLMANEQTR) are excised as a propeptide. 4 disulfides stabilise this stretch: cysteine 45/cysteine 60, cysteine 52/cysteine 69, cysteine 59/cysteine 85, and cysteine 71/cysteine 83.

The protein belongs to the neurotoxin 19 (CSTX) family. 02 (D7) subfamily. In terms of tissue distribution, expressed by the venom gland.

It localises to the secreted. The protein is Toxin-like structure LSTX-D3 of Lycosa singoriensis (Wolf spider).